We begin with the raw amino-acid sequence, 600 residues long: Translation initiation factor IF-2 (600 aa).

The region spanning 112-279 (ERAPIITVMG…AINLQAEILE (168 aa)) is the tr-type G domain. A G1 region spans residues 121–128 (GHVDHGKT). Residue 121–128 (GHVDHGKT) coordinates GTP. The G2 stretch occupies residues 146 to 150 (GITQH). A G3 region spans residues 167–170 (DTPG). GTP is bound by residues 167 to 171 (DTPGH) and 221 to 224 (NKMD). Positions 221 to 224 (NKMD) are G4. Residues 257-259 (SAL) are G5.

Belongs to the TRAFAC class translation factor GTPase superfamily. Classic translation factor GTPase family. IF-2 subfamily.

It localises to the cytoplasm. Its function is as follows. One of the essential components for the initiation of protein synthesis. Protects formylmethionyl-tRNA from spontaneous hydrolysis and promotes its binding to the 30S ribosomal subunits. Also involved in the hydrolysis of GTP during the formation of the 70S ribosomal complex. The polypeptide is Translation initiation factor IF-2 (Mycoplasma mobile (strain ATCC 43663 / 163K / NCTC 11711) (Mesomycoplasma mobile)).